Consider the following 107-residue polypeptide: MEQFECINIQQAQQKLADDNALLVDIRDAQSFAAAHASGAFHLSNESLPPFLAQSDLARPVLVMCYHGNSSKGAAQYLLGQGFSAAYSIDGGFEAWRIAFPQQVSAQ.

One can recognise a Rhodanese domain in the interval 17 to 105 (ADDNALLVDI…WRIAFPQQVS (89 aa)). Catalysis depends on C65, which acts as the Cysteine persulfide intermediate.

Belongs to the GlpE family.

It is found in the cytoplasm. It carries out the reaction thiosulfate + hydrogen cyanide = thiocyanate + sulfite + 2 H(+). The catalysed reaction is thiosulfate + [thioredoxin]-dithiol = [thioredoxin]-disulfide + hydrogen sulfide + sulfite + 2 H(+). Functionally, transferase that catalyzes the transfer of sulfur from thiosulfate to thiophilic acceptors such as cyanide or dithiols. May function in a CysM-independent thiosulfate assimilation pathway by catalyzing the conversion of thiosulfate to sulfite, which can then be used for L-cysteine biosynthesis. This chain is Thiosulfate sulfurtransferase GlpE, found in Erwinia tasmaniensis (strain DSM 17950 / CFBP 7177 / CIP 109463 / NCPPB 4357 / Et1/99).